Consider the following 190-residue polypeptide: Jupiter microtubule associated homolog 2 (190 aa).

An N-acetylmethionine modification is found at M1. The interval 1 to 190 (MFQVPDSEGG…PGGKSSISFY (190 aa)) is disordered. Position 30 is a phosphoserine (S30). A Phosphothreonine modification is found at T35. Polar residues predominate over residues 35–44 (TPSSRPNRMA). S45, S69, and S97 each carry phosphoserine. The segment covering 110-129 (KPKDHVFLCEGEEPKSDLKA) has biased composition (basic and acidic residues). Residues S132 and S144 each carry the phosphoserine modification. A compositionally biased stretch (basic and acidic residues) spans 139–167 (PGEKGSARKAGPAKEQEPMPTVDSHEPRL).

Belongs to the JUPITER family. Monomer. Dimer. Interacts with TPCN1. In terms of tissue distribution, expressed in liver, kidney, prostate, testis and uterus.

The protein localises to the cytoplasm. The protein resides in the nucleus. Its function is as follows. Nicotinic acid adenine dinucleotide phosphate (NAADP) binding protein required for NAADP-evoked intracellular calcium release. Confers NAADP-sensitivity to the two pore channels (TPCs) complex. Enables NAADP to activate Ca(2+) release from the endoplasmic reticulum through ryanodine receptors. Functionally, (Microbial infection) Involved in the endolysosomal trafficking of human coronavirus SARS-CoV-2. The sequence is that of Jupiter microtubule associated homolog 2 from Homo sapiens (Human).